Here is a 223-residue protein sequence, read N- to C-terminus: MTCCGCSGGCGSSCGGCGSSCCKPVCCCVPVCSCSSCGGCKGGCGSCGGCKGGCGSCGGCKGGCGSCGGCKGGCCQSSCCKPCCCQSSCCKPCCSSGCGSSCCQSSCCKPCCCQSSCCKPCCSSGCGSSCCQSSCCKPCCCQSSCCKPCCCQSSCCKPCCSSGCGSSCCQSSCCKPCCCQSSCCKPCCCQSSCCKPCCCQSSCCKPCCCQSSCCAPVCCQCKI.

14 tandem repeats follow at residues 21-24 (CCKP), 27-30 (CCVP), 79-82 (CCKP), 89-92 (CCKP), 107-110 (CCKP), 117-120 (CCKP), 135-138 (CCKP), 145-148 (CCKP), 155-158 (CCKP), 173-176 (CCKP), 183-186 (CCKP), 193-196 (CCKP), 203-206 (CCKP), and 213-216 (CCAP). The segment at 21–216 (CCKPVCCCVP…CCCQSSCCAP (196 aa)) is 14 X 4 AA repeats of C-C-X-P.

It belongs to the KRTAP type 5 family. In terms of assembly, interacts with hair keratins. As to expression, expressed during the active phases of the hair cycle in the medulla and the inner root sheath of the forming hair. Also expressed in the upper layers of the epidermis of skin.

Its function is as follows. In the hair cortex, hair keratin intermediate filaments are embedded in an interfilamentous matrix, consisting of hair keratin-associated protein (KRTAP), which are essential for the formation of a rigid and resistant hair shaft through their extensive disulfide bond cross-linking with abundant cysteine residues of hair keratins. The matrix proteins include the high-sulfur and high-glycine-tyrosine keratins. This chain is Keratin-associated protein 5-4, found in Mus musculus (Mouse).